A 443-amino-acid polypeptide reads, in one-letter code: ATP-dependent protease ATPase subunit HslU (443 aa).

Residues Ile-18 and 60–65 (GVGKTE) contribute to the ATP site. Residues 141–165 (DQWGQNEENDTDSSTRQSFRKKLRE) are disordered. 3 residues coordinate ATP: Asp-256, Glu-321, and Arg-393.

The protein belongs to the ClpX chaperone family. HslU subfamily. A double ring-shaped homohexamer of HslV is capped on each side by a ring-shaped HslU homohexamer. The assembly of the HslU/HslV complex is dependent on binding of ATP.

It is found in the cytoplasm. Its function is as follows. ATPase subunit of a proteasome-like degradation complex; this subunit has chaperone activity. The binding of ATP and its subsequent hydrolysis by HslU are essential for unfolding of protein substrates subsequently hydrolyzed by HslV. HslU recognizes the N-terminal part of its protein substrates and unfolds these before they are guided to HslV for hydrolysis. This is ATP-dependent protease ATPase subunit HslU from Photobacterium profundum (strain SS9).